Reading from the N-terminus, the 224-residue chain is IMKVTQDGSIPQIASNINNWLNTHNPDVVFLWIGGNDLLLSGNVNATGLSNLIDQIFTVKPNVTLFVADYYPWPEAVKQYNAVIPGIVQQKANAGKKVYFVKLSEIQFDRNTDISWDGLHLSEIGYTKIANIWYKYTIDILKALAGQTQPTPSPSPTPTDSPLVKKGDVNLDGQVNSTDFSLLKRYILKVVDINSINVTNADMNNDGNINSTDISILKRILLRN.

The interval 147–168 (QTQPTPSPSPTPTDSPLVKKGD) is disordered. In terms of domain architecture, Dockerin spans 162-224 (PLVKKGDVNL…SILKRILLRN (63 aa)).

The enzyme catalyses Endohydrolysis of (1-&gt;4)-beta-D-glucosidic linkages in cellulose, lichenin and cereal beta-D-glucans.. This enzyme catalyzes the endohydrolysis of 1,4-beta-glucosidic linkages in cellulose, lichenin and cereal beta-D-glucans. This Acetivibrio thermocellus (Hungateiclostridium thermocellum) protein is Putative endoglucanase X (celX).